The following is a 214-amino-acid chain: uncharacterized protein (214 aa).

Residues 2-118 (KIVIADDHHV…ELVKTRQVHG (117 aa)) enclose the Response regulatory domain. Position 53 is a 4-aspartylphosphate (Asp53). An HTH luxR-type domain is found at 142–207 (EKEKYYQLTR…QAALFAVKYN (66 aa)). A DNA-binding region (H-T-H motif) is located at residues 166 to 185 (NKEIAAALFISEKTVKTHVS).

Post-translationally, phosphorylated by YhcY.

The protein resides in the cytoplasm. In terms of biological role, member of the two-component regulatory system YhcY/YhcZ. This is an uncharacterized protein from Bacillus subtilis (strain 168).